The following is a 370-amino-acid chain: Probable pectin lyase E (370 aa).

The cysteines at positions 75 and 96 are disulfide-linked. R245 is an active-site residue. N307 is a glycosylation site (N-linked (GlcNAc...) asparagine). A disulfide bridge connects residues C311 and C319.

This sequence belongs to the polysaccharide lyase 1 family.

The protein resides in the secreted. The catalysed reaction is Eliminative cleavage of (1-&gt;4)-alpha-D-galacturonan methyl ester to give oligosaccharides with 4-deoxy-6-O-methyl-alpha-D-galact-4-enuronosyl groups at their non-reducing ends.. Pectinolytic enzymes consist of four classes of enzymes: pectin lyase, polygalacturonase, pectin methylesterase and rhamnogalacturonase. Among pectinolytic enzymes, pectin lyase is the most important in depolymerization of pectin, since it cleaves internal glycosidic bonds of highly methylated pectins. The chain is Probable pectin lyase E (pelE) from Aspergillus niger.